A 476-amino-acid polypeptide reads, in one-letter code: Serine/threonine-protein kinase Chk1 (476 aa).

Positions 9–265 constitute a Protein kinase domain; the sequence is WDLVQTLGEG…IPDIKKDRWY (257 aa). Residues 15-23 and lysine 38 each bind ATP; that span reads LGEGAYGEV. Residue aspartate 130 is the Proton acceptor of the active site. Residues 272-329 are disordered; that stretch reads GTKRGRVSSGGVTESPGALPKHIRSDTDFSPVKSALGEDKASYSTSQPEPGTGGALWD. Position 280 is a phosphoserine; by PKB/AKT1 (serine 280). At serine 296 the chain carries Phosphoserine. At serine 317 the chain carries Phosphoserine; by ATM and ATR. Residue serine 345 is modified to Phosphoserine. The tract at residues 391–476 is autoinhibitory region; the sequence is RSLRDVCEKM…STQKVWLPPP (86 aa).

The protein belongs to the protein kinase superfamily. CAMK Ser/Thr protein kinase family. NIM1 subfamily. In terms of processing, phosphorylated by ATR in a RAD17-dependent manner in response to ultraviolet irradiation and inhibition of DNA replication. Phosphorylated by ATM in response to ionizing irradiation. Phosphorylation at Ser-345 induces a change in the conformation of the protein and activates the kinase activity. Phosphorylation at Ser-345 also increases binding to 14-3-3 proteins and promotes nuclear retention.

It localises to the nucleus. It is found in the chromosome. The protein localises to the cytoplasm. Its subcellular location is the cytoskeleton. The protein resides in the microtubule organizing center. It localises to the centrosome. The catalysed reaction is L-seryl-[protein] + ATP = O-phospho-L-seryl-[protein] + ADP + H(+). It catalyses the reaction L-threonyl-[protein] + ATP = O-phospho-L-threonyl-[protein] + ADP + H(+). Activated through phosphorylation by atr or atm in response to DNA damage or inhibition of DNA replication. In terms of biological role, serine/threonine-protein kinase which is required for checkpoint-mediated cell cycle arrest and activation of DNA repair in response to the presence of DNA damage or unreplicated DNA. May also negatively regulate cell cycle progression during unperturbed cell cycles. This regulation is achieved by a number of mechanisms that together help to preserve the integrity of the genome. Recognizes the substrate consensus sequence [R-X-X-S/T]. Binds to and phosphorylates CDC25A, CDC25B and CDC25C. This inhibits their activity through proteasomal degradation, nucleo-cytoplasmic shuttling and inhibition by proteins of the 13-3-3 family. Inhibition of CDC25 leads to increased inhibitory tyrosine phosphorylation of CDK-cyclin complexes and blocks cell cycle progression. May promote DNA repair, regulate chromatin assembly and the transcription of genes that regulate cell-cycle progression. May also play a role in replication fork maintenance. The polypeptide is Serine/threonine-protein kinase Chk1 (CHEK1) (Gallus gallus (Chicken)).